A 129-amino-acid polypeptide reads, in one-letter code: Small ribosomal subunit protein bS6 (129 aa).

The segment at 103-129 (LKQKEERAERAPRREERAEAKPEAAAE) is disordered. Residues 104-129 (KQKEERAERAPRREERAEAKPEAAAE) show a composition bias toward basic and acidic residues.

It belongs to the bacterial ribosomal protein bS6 family.

Its function is as follows. Binds together with bS18 to 16S ribosomal RNA. In Vibrio campbellii (strain ATCC BAA-1116), this protein is Small ribosomal subunit protein bS6.